A 380-amino-acid polypeptide reads, in one-letter code: MYG1 exonuclease (380 aa).

A mitochondrion-targeting transit peptide spans M1–I46. N6-acetyllysine is present on residues K266 and K272.

The protein belongs to the MYG1 family. In terms of tissue distribution, ubiquitously expressed, with highest levels in testis.

It localises to the nucleus. Its subcellular location is the nucleoplasm. It is found in the mitochondrion matrix. The protein resides in the nucleolus. Functionally, 3'-5' RNA exonuclease which cleaves in situ on specific transcripts in both nucleus and mitochondrion. Involved in regulating spatially segregated organellar RNA processing, acts as a coordinator of nucleo-mitochondrial crosstalk. In nucleolus, processes pre-ribosomal RNA involved in ribosome assembly and alters cytoplasmic translation. In mitochondrial matrix, processes 3'-termini of the mito-ribosomal and messenger RNAs and controls translation of mitochondrial proteins. The protein is MYG1 exonuclease of Mus musculus (Mouse).